A 382-amino-acid chain; its full sequence is Lipid-A-disaccharide synthase (382 aa).

It belongs to the LpxB family.

It catalyses the reaction 2-N,3-O-bis[(3R)-3-hydroxytetradecanoyl]-alpha-D-glucosaminyl 1-phosphate + UDP-2-N,3-O-bis[(3R)-3-hydroxytetradecanoyl]-alpha-D-glucosamine = lipid A disaccharide (E. coli) + UDP + H(+). The enzyme catalyses a lipid X + a UDP-2-N,3-O-bis[(3R)-3-hydroxyacyl]-alpha-D-glucosamine = a lipid A disaccharide + UDP + H(+). Its pathway is glycolipid biosynthesis; lipid IV(A) biosynthesis; lipid IV(A) from (3R)-3-hydroxytetradecanoyl-[acyl-carrier-protein] and UDP-N-acetyl-alpha-D-glucosamine: step 5/6. Functionally, condensation of UDP-2,3-diacylglucosamine and 2,3-diacylglucosamine-1-phosphate to form lipid A disaccharide, a precursor of lipid A, a phosphorylated glycolipid that anchors the lipopolysaccharide to the outer membrane of the cell. The sequence is that of Lipid-A-disaccharide synthase from Sodalis glossinidius (strain morsitans).